We begin with the raw amino-acid sequence, 219 residues long: Large ribosomal subunit protein uL3 (219 aa).

This sequence belongs to the universal ribosomal protein uL3 family. In terms of assembly, part of the 50S ribosomal subunit. Forms a cluster with proteins L14 and L19.

One of the primary rRNA binding proteins, it binds directly near the 3'-end of the 23S rRNA, where it nucleates assembly of the 50S subunit. This is Large ribosomal subunit protein uL3 from Chlamydia pneumoniae (Chlamydophila pneumoniae).